The sequence spans 122 residues: Phosphoribosyl-ATP pyrophosphatase (122 aa).

It belongs to the PRA-PH family.

The protein localises to the cytoplasm. The enzyme catalyses 1-(5-phospho-beta-D-ribosyl)-ATP + H2O = 1-(5-phospho-beta-D-ribosyl)-5'-AMP + diphosphate + H(+). It functions in the pathway amino-acid biosynthesis; L-histidine biosynthesis; L-histidine from 5-phospho-alpha-D-ribose 1-diphosphate: step 2/9. The sequence is that of Phosphoribosyl-ATP pyrophosphatase from Burkholderia mallei (strain NCTC 10247).